The following is a 907-amino-acid chain: Collagen alpha-2(I) chain (907 aa).

Disordered stretches follow at residues 1-183 (GPMG…GIPG) and 199-907 (IPGP…PGPS). Positions 19 to 33 (AGEDGHPGKPGRERG) are enriched in basic and acidic residues. Low complexity-rich tracts occupy residues 101-130 (VGAP…SAGP), 155-169 (AGPR…VSGP), and 206-221 (PGPV…RGIV). Position 260 is a deamidated asparagine (N260). Position 272 is a 4-hydroxyproline (P272). Low complexity-rich tracts occupy residues 272-281 (PGIRGSRGIP), 292-307 (PPGS…VRGP), 340-362 (PAGI…RGEP), 424-441 (PGES…SRGP), 453-475 (EPGV…PGER), 495-507 (APGA…PAGA), 535-555 (VGPA…QPGA), and 566-581 (NGPV…AGPA). A compositionally biased stretch (gly residues) spans 591-600 (GSRGDGGPPG). Low complexity-rich tracts occupy residues 601–611 (ATGFPGAAGRT), 664–691 (EAGT…IPGS), 706–745 (EPGP…NPGN), 756–766 (NSGPVGAAGAP), and 783–804 (EPGP…PSGP). The segment covering 808 to 819 (RGDKGEPGDKGP) has biased composition (basic and acidic residues). Residues 892–907 (AGPPGPPGPPGPPGPS) are compositionally biased toward pro residues.

Belongs to the fibrillar collagen family. As to quaternary structure, trimers of one alpha 2(I) and two alpha 1(I) chains. Interacts (via C-terminus) with TMEM131 (via PapD-L domain); the interaction is direct and is involved in assembly and TRAPPIII ER-to-Golgi transport complex-dependent secretion of collagen. Prolines at the third position of the tripeptide repeating unit (G-X-Y) are hydroxylated in some or all of the chains. Forms the fibrils of tendon, ligaments and bones. In bones, the fibrils are mineralized with calcium hydroxyapatite.

Its subcellular location is the secreted. The protein localises to the extracellular space. The protein resides in the extracellular matrix. Functionally, type I collagen is a member of group I collagen (fibrillar forming collagen). The chain is Collagen alpha-2(I) chain from Macrauchenia sp.